Consider the following 551-residue polypeptide: Methyl-accepting chemotaxis protein I (551 aa).

Topologically, residues 1–6 (MLKRIK) are cytoplasmic. The chain crosses the membrane as a helical span at residues 7-30 (IVTSLLLVLAVFGLLQLTSGGLFF). Residues 31–190 (NALKNDKENF…AVSDNNASYS (160 aa)) lie on the Periplasmic side of the membrane. The tract at residues 64-73 (RNTLNRAGIR) is the 3 Arg may form a positively charged pocket, which binds the alpha-carboxyl group of the attractant AA. A helical transmembrane segment spans residues 191 to 210 (QAMWILVGVMIVVLAVIFAV). The Cytoplasmic segment spans residues 211 to 551 (WFGIKASLVA…ADSEENWETF (341 aa)). The region spanning 216-268 (ASLVAPMNRLIDSIRHIAGGDLVKPIEVDGSNEMGQLAESLRHMQGELMRTVG) is the HAMP domain. One can recognise a Methyl-accepting transducer domain in the interval 273–502 (GANAIYSGAS…ESAAAAAALE (230 aa)). Gln-297 is modified (glutamate methyl ester (Gln)). Glu-304 bears the Glutamate methyl ester (Glu) mark. Gln-311 bears the Glutamate methyl ester (Gln) mark. 2 positions are modified to glutamate methyl ester (Glu): Glu-493 and Glu-502.

Belongs to the methyl-accepting chemotaxis (MCP) protein family.

It localises to the cell inner membrane. Functionally, receptor for the attractant L-serine and related amino acids. Is also responsible for chemotaxis away from a wide range of repellents, including leucine, indole, and weak acids. Its function is as follows. Chemotactic-signal transducers respond to changes in the concentration of attractants and repellents in the environment, transduce a signal from the outside to the inside of the cell, and facilitate sensory adaptation through the variation of the level of methylation. Attractants increase the level of methylation while repellents decrease the level of methylation, the methyl groups are added by the methyltransferase CheR and removed by the methylesterase CheB. This Escherichia coli (strain K12) protein is Methyl-accepting chemotaxis protein I (tsr).